Consider the following 227-residue polypeptide: DNA repair protein RecO (227 aa).

The protein belongs to the RecO family.

In terms of biological role, involved in DNA repair and RecF pathway recombination. This chain is DNA repair protein RecO, found in Pseudomonas syringae pv. syringae (strain B728a).